The sequence spans 171 residues: Co-chaperone protein HscB homolog (171 aa).

In terms of domain architecture, J spans 2-74 (NHFELFGLPL…ISRAEYLLVQ (73 aa)).

Belongs to the HscB family. As to quaternary structure, interacts with HscA and stimulates its ATPase activity.

Its function is as follows. Co-chaperone involved in the maturation of iron-sulfur cluster-containing proteins. Seems to help targeting proteins to be folded toward HscA. This chain is Co-chaperone protein HscB homolog, found in Vibrio atlanticus (strain LGP32) (Vibrio splendidus (strain Mel32)).